The sequence spans 127 residues: Glycine cleavage system H protein (127 aa).

Positions 24 to 105 constitute a Lipoyl-binding domain; that stretch reads AALVGITDFA…YGEGWLVKIR (82 aa). K65 carries the post-translational modification N6-lipoyllysine.

Belongs to the GcvH family. As to quaternary structure, the glycine cleavage system is composed of four proteins: P, T, L and H. It depends on (R)-lipoate as a cofactor.

Functionally, the glycine cleavage system catalyzes the degradation of glycine. The H protein shuttles the methylamine group of glycine from the P protein to the T protein. This Chlorobium limicola (strain DSM 245 / NBRC 103803 / 6330) protein is Glycine cleavage system H protein.